A 439-amino-acid polypeptide reads, in one-letter code: Prenyltransferase iacE (439 aa).

Residues 88-89 (WI), glutamate 97, arginine 112, lysine 198, tyrosine 200, arginine 271, lysine 273, and tyrosine 275 each bind substrate.

Belongs to the tryptophan dimethylallyltransferase family.

It catalyses the reaction siccayne + dimethylallyl diphosphate = pestalodiol + diphosphate. It functions in the pathway secondary metabolite biosynthesis. In terms of biological role, prenyltransferase; part of the gene cluster that mediates the biosynthesis of iso-A82775C, a enylepoxycyclohexane and biosynthetic precursor of the chloropestolide anticancer natural products. Within the cluster, the prenyltransferase iacE prenylates siccayne to generate pestalodiol E, using dimethylallyl diphosphate (DMAPP) as cosubstrate. The probable oxidoreductase iacF is then involved in the epoxidation of pestalodiol F to pestalodiol F, which is further converted to pestalofone A by the short-chain dehydrogenase/reductase iacG. Iso-A82775C is subsequently generated from pestalofone A by the short-chain dehydrogenase/reductase iacC. Iso-A82775C is further condensed with maldoxin via a Diels-Alder reaction to produce the anticancer natural products chloropestolides A to E. This Pestalotiopsis fici (strain W106-1 / CGMCC3.15140) protein is Prenyltransferase iacE.